A 126-amino-acid chain; its full sequence is Protein chibby homolog 1 (126 aa).

Over residues 1 to 10 (MPFFGNTFSP) the composition is skewed to polar residues. Positions 1-26 (MPFFGNTFSPKKTPPRKSASLSNLHS) are disordered. 2 positions are modified to phosphoserine: Ser9 and Ser20. A minimal region for the interaction with PKD2 region spans residues 60–112 (IAETGVSGGVDRREVQRLRRRNQQLEEENNLLRLKVDILLDMLSESTAESHLM). The stretch at 67-125 (GGVDRREVQRLRRRNQQLEEENNLLRLKVDILLDMLSESTAESHLMEKELDELRISRKR) forms a coiled coil. The tract at residues 77-98 (LRRRNQQLEEENNLLRLKVDIL) is leucine-zipper; mediates homodimerization.

It belongs to the chibby family. As to quaternary structure, homodimer. Homodimerization is essential for nuclear localization and interaction with KPNA4 but is dispensable for interaction with CTNNB1. Interacts with polycystin-2/PKD2 and GM130. Interacts with the C-terminal region of CTNNB1. Interacts (C-terminus) with TCIM (C-terminus), TCIM competes with CTNNB1 for the interaction with CBY1. Interacts with FAM92A; this interaction facilitates targeting of FAM92A to cilium basal body. Interacts with CIBAR2. Interacts with KPNA4. In terms of tissue distribution, widely expressed. Expressed at higher levels in heart, skeletal muscle, kidney and placenta. Also found in brain, lung, liver and testis. Significantly down-regulated in thyroid and metastatic uterine tumors.

It localises to the nucleus speckle. The protein resides in the cytoplasm. It is found in the cytoskeleton. Its subcellular location is the cilium basal body. The protein localises to the microtubule organizing center. It localises to the centrosome. The protein resides in the centriole. It is found in the golgi apparatus. Its subcellular location is the trans-Golgi network. The protein localises to the cell projection. It localises to the cilium. The protein resides in the flagellum. It is found in the nucleus. Its function is as follows. Inhibits the Wnt/Wingless pathway by binding to CTNNB1/beta-catenin and inhibiting beta-catenin-mediated transcriptional activation through competition with TCF/LEF transcription factors. Has also been shown to play a role in regulating the intracellular trafficking of polycystin-2/PKD2 and possibly of other intracellular proteins. Promotes adipocyte and cardiomyocyte differentiation. The sequence is that of Protein chibby homolog 1 (CBY1) from Homo sapiens (Human).